We begin with the raw amino-acid sequence, 611 residues long: Probable methyltransferase PMT19 (611 aa).

Topologically, residues 1–15 (MNPSQQHLPKLCPKR) are cytoplasmic. Residues 16-36 (LFLFFTPFLLFSLYYILTTIK) form a helical; Signal-anchor for type II membrane protein membrane-spanning segment. Residues 37 to 611 (TITISSQDRH…TILIVDNSIK (575 aa)) lie on the Lumenal side of the membrane. Residues Asn-68, Asn-97, Asn-289, Asn-408, Asn-411, and Asn-587 are each glycosylated (N-linked (GlcNAc...) asparagine).

It belongs to the methyltransferase superfamily.

Its subcellular location is the endoplasmic reticulum membrane. This Arabidopsis thaliana (Mouse-ear cress) protein is Probable methyltransferase PMT19.